The chain runs to 91 residues: Elongation factor 1-beta (91 aa).

This sequence belongs to the EF-1-beta/EF-1-delta family.

Its function is as follows. Promotes the exchange of GDP for GTP in EF-1-alpha/GDP, thus allowing the regeneration of EF-1-alpha/GTP that could then be used to form the ternary complex EF-1-alpha/GTP/AAtRNA. The protein is Elongation factor 1-beta of Thermofilum pendens (strain DSM 2475 / Hrk 5).